The sequence spans 188 residues: MPHSSPGAPLDPVAFIHSQIRTVPDWPQPGVQFRDITTLLQSPKALRILVDLFVERYVDAKLDYVAGLDARGFIIAPIVAYELSVGFVPIRKVGKLPYKTRSESYDLEYGSATVEIHEDACRPGDRVIIMDDLIATGGTMMAGRNLLQRLGAVVVEGAAIIDLPDLGGSTLLRNAGLPVYTVTEFAGH.

It belongs to the purine/pyrimidine phosphoribosyltransferase family. In terms of assembly, homodimer.

The protein resides in the cytoplasm. The catalysed reaction is AMP + diphosphate = 5-phospho-alpha-D-ribose 1-diphosphate + adenine. Its pathway is purine metabolism; AMP biosynthesis via salvage pathway; AMP from adenine: step 1/1. In terms of biological role, catalyzes a salvage reaction resulting in the formation of AMP, that is energically less costly than de novo synthesis. This is Adenine phosphoribosyltransferase from Burkholderia ambifaria (strain MC40-6).